The sequence spans 221 residues: N-(5'-phosphoribosyl)anthranilate isomerase (221 aa).

This sequence belongs to the TrpF family.

It catalyses the reaction N-(5-phospho-beta-D-ribosyl)anthranilate = 1-(2-carboxyphenylamino)-1-deoxy-D-ribulose 5-phosphate. It participates in amino-acid biosynthesis; L-tryptophan biosynthesis; L-tryptophan from chorismate: step 3/5. The protein is N-(5'-phosphoribosyl)anthranilate isomerase of Chlorobaculum tepidum (strain ATCC 49652 / DSM 12025 / NBRC 103806 / TLS) (Chlorobium tepidum).